Reading from the N-terminus, the 249-residue chain is Flagellar brake protein YcgR (249 aa).

The PilZ domain occupies 117–236; it reads QRREFFRVDA…ERELQQVIFS (120 aa).

The protein belongs to the YcgR family. Monomer. Interacts with the flagellar basal bodies.

The protein resides in the bacterial flagellum basal body. Functionally, acts as a flagellar brake, regulating swimming and swarming in a bis-(3'-5') cyclic diguanylic acid (c-di-GMP)-dependent manner. Binds 1 c-di-GMP dimer per subunit. Increasing levels of c-di-GMP lead to decreased motility. This is Flagellar brake protein YcgR from Erwinia tasmaniensis (strain DSM 17950 / CFBP 7177 / CIP 109463 / NCPPB 4357 / Et1/99).